The sequence spans 313 residues: Porphobilinogen deaminase (313 aa).

Position 242 is an S-(dipyrrolylmethanemethyl)cysteine (C242).

The protein belongs to the HMBS family. In terms of assembly, monomer. The cofactor is dipyrromethane.

It catalyses the reaction 4 porphobilinogen + H2O = hydroxymethylbilane + 4 NH4(+). Its pathway is porphyrin-containing compound metabolism; protoporphyrin-IX biosynthesis; coproporphyrinogen-III from 5-aminolevulinate: step 2/4. Tetrapolymerization of the monopyrrole PBG into the hydroxymethylbilane pre-uroporphyrinogen in several discrete steps. In Klebsiella pneumoniae subsp. pneumoniae (strain ATCC 700721 / MGH 78578), this protein is Porphobilinogen deaminase.